We begin with the raw amino-acid sequence, 1138 residues long: MASEETSLRALESLMSEFFHNVTSNERKREIESLLNNFAQQLGAWRFCFYFLSESHNDYVLMYSLSVFENLINKMWLGVPSQEKMQIRSSLPKLLLSQHKSLPSFICNKLCKVIVDMGRQDWPMFYHDFFTNILQLIQTPSTTPLGLIMLKTASEELACPREDLSVARKEELRKLLLEQVPTVLGLLTGVLESIWDKHSITAATPPPSPTASDTDDLLSNLIHTPNLTKQLSQPPPSLEAESERVCALALECLSHLFSWIPLSASITPSLLTTIFHFARLGCDARSRHTTSVTTNTTSSVVNGGSSSPPLHSAAPTRDRGRLGVLAMSCINELMCKNCVPLEFQEYLLRVCQQTFYLLQRITRETNAHSVRNRLEELDESYVEKFTDFLRLFVSVHLRRIESNAQFPVVEFLSLLFKYTFHQPSHEGYLSCLDIWALFLDYLTNKIRNRLEDREAIIGRYEDALVLLLTEVLNRIQFRFNQTQLEELDDETLDDDQQTEWQRYLRHSLEVVAKIMELLPTHAFSTLFAALQENLEVYLGLQRCLVTNGNDQRLNVTAENDCRRLHCSLRDLSSLLQAVGRLAEYFIGDVFGARFNDALRVVERLVEVTLYGSRIKLYNMETAVPSVLKPDLIDVHAQSLAALQAYSHWLARYYSEVQRQNPEQFISIISTAMEALPPLISSKVQEKLLLSACHLLVSIATTVRPVFLINIPAVQKVFSRITDGSAQRLPEEAQVLLCRALSNVLLLPWPNVPEGEQQWGERSSHHANLLNALTRDYRLLKGSSPPQRKGQLEATKRVICQTLGVLRDVVENISGEGTKSRQTCYQSLHESSQLSLALFPAYIHQSDVTEEMLSFFLALFQGLRVQMGAPFTEQIIQTFLNMFTREQLAESILQEGSAGCHVVEKFLKILQVVVQEPGQAFKPFLPSILSLCMEQLYPIIAERPSPDVKAELFELLFQLLHHNWRYFYRSSVLASVHRDGSDEPMENQAQFIVVMQAFGQSFLQPDIHIFRQNLSYLETLNSKHKLYHKKLFQTVMLPQFVSVLLQVLIHKSHDLLQEEIGIAVYNMASVDFSTFFSAFLPEFLTGCQGLDTSQKSVLARNFKMERDLPSFTQSVHRLVNDLRYYRLCNDSLPPGTVKL.

One can recognise an Importin N-terminal domain in the interval 31-97 (IESLLNNFAQ…RSSLPKLLLS (67 aa)). The segment covering 291-307 (SVTTNTTSSVVNGGSSS) has biased composition (low complexity). The tract at residues 291 to 315 (SVTTNTTSSVVNGGSSSPPLHSAAP) is disordered.

Belongs to the exportin family.

It localises to the nucleus. It is found in the cytoplasm. Functionally, mediates the nuclear export of actin and profilin-actin complexes in somatic cells. Oocyte nuclei lack active actin export. Mediates the nuclear export of actin and profilin-actin complexes in somatic cells. The protein is Exportin-6-B (xpo6-b) of Xenopus laevis (African clawed frog).